The sequence spans 278 residues: Single-strand selective monofunctional uracil-DNA glycosylase (278 aa).

Positions 84, 98, and 163 each coordinate substrate. The tract at residues Ser-173–Arg-187 is DNA-binding. Substrate is bound at residue His-239.

This sequence belongs to the uracil-DNA glycosylase (UDG) superfamily. SMUG1 family.

The protein localises to the nucleus. Recognizes base lesions in the genome and initiates base excision DNA repair. Acts as a monofunctional DNA glycosylase specific for uracil (U) residues in DNA with a preference for single-stranded DNA substrates. The activity is greater toward mismatches (U/G) compared to matches (U/A). Excises uracil (U), 5-formyluracil (fU) and uracil derivatives bearing an oxidized group at C5 [5-hydroxyuracil (hoU) and 5-hydroxymethyluracil (hmU)] in ssDNA and dsDNA, but not analogous cytosine derivatives (5-hydroxycytosine and 5-formylcytosine), nor other oxidized bases. The activity is damage-specific and salt-dependent. The substrate preference is the following: ssDNA &gt; dsDNA (G pair) = dsDNA (A pair) at low salt concentration, and dsDNA (G pair) &gt; dsDNA (A pair) &gt; ssDNA at high salt concentration. The protein is Single-strand selective monofunctional uracil-DNA glycosylase (Smug1) of Rattus norvegicus (Rat).